The following is a 60-amino-acid chain: Beta-toxin BotIT2 (60 aa).

The LCN-type CS-alpha/beta domain occupies D1–C60. 4 disulfide bridges follow: C10–C60, C14–C35, C21–C42, and C25–C44.

This sequence belongs to the long (4 C-C) scorpion toxin superfamily. Sodium channel inhibitor family. Beta subfamily. As to expression, expressed by the venom gland.

It localises to the secreted. Beta toxins bind voltage-independently at site-4 of sodium channels (Nav) and shift the voltage of activation toward more negative potentials thereby affecting sodium channel activation and promoting spontaneous and repetitive firing. This toxin specifically acts by inducing a new current with very slow activation/deactivation kinetics due to the transformation of normal fast channels into slow ones. It possess properties of excitatory and depressant toxins. It is highly active on insects and less active on mammals. The sequence is that of Beta-toxin BotIT2 from Buthus occitanus tunetanus (Common European scorpion).